Here is a 253-residue protein sequence, read N- to C-terminus: Methionine aminopeptidase (253 aa).

H78 serves as a coordination point for substrate. A divalent metal cation-binding residues include D95, D106, and H169. H176 contributes to the substrate binding site. Positions 206 and 237 each coordinate a divalent metal cation.

This sequence belongs to the peptidase M24A family. Methionine aminopeptidase type 1 subfamily. In terms of assembly, monomer. The cofactor is Co(2+). It depends on Zn(2+) as a cofactor. Requires Mn(2+) as cofactor. Fe(2+) is required as a cofactor.

It catalyses the reaction Release of N-terminal amino acids, preferentially methionine, from peptides and arylamides.. Removes the N-terminal methionine from nascent proteins. The N-terminal methionine is often cleaved when the second residue in the primary sequence is small and uncharged (Met-Ala-, Cys, Gly, Pro, Ser, Thr, or Val). Requires deformylation of the N(alpha)-formylated initiator methionine before it can be hydrolyzed. This Helicobacter pylori (strain ATCC 700392 / 26695) (Campylobacter pylori) protein is Methionine aminopeptidase.